A 734-amino-acid polypeptide reads, in one-letter code: Ribosomal RNA large subunit methyltransferase K/L (734 aa).

The 119-residue stretch at 49-167 folds into the THUMP domain; that stretch reads HAYRICMWSR…KTEHTYCLDL (119 aa).

It belongs to the methyltransferase superfamily. RlmKL family.

Its subcellular location is the cytoplasm. The catalysed reaction is guanosine(2445) in 23S rRNA + S-adenosyl-L-methionine = N(2)-methylguanosine(2445) in 23S rRNA + S-adenosyl-L-homocysteine + H(+). It catalyses the reaction guanosine(2069) in 23S rRNA + S-adenosyl-L-methionine = N(2)-methylguanosine(2069) in 23S rRNA + S-adenosyl-L-homocysteine + H(+). Specifically methylates the guanine in position 2445 (m2G2445) and the guanine in position 2069 (m7G2069) of 23S rRNA. The chain is Ribosomal RNA large subunit methyltransferase K/L from Acinetobacter baumannii (strain SDF).